We begin with the raw amino-acid sequence, 353 residues long: Lactosylceramide 4-alpha-galactosyltransferase (353 aa).

The Cytoplasmic segment spans residues 1 to 22; sequence MSKPPDLLLRLLRGAPRQRVCT. The helical; Signal-anchor for type II membrane protein transmembrane segment at 23 to 43 threads the bilayer; sequence LFIIGFKFTFFVSIMIYWHVV. At 44-353 the chain is on the lumenal side; that stretch reads GEPKEKGQLY…TTHEAMKMYL (310 aa). Residue N121 is glycosylated (N-linked (GlcNAc...) asparagine). Residues 192 to 194 carry the DXD motif motif; that stretch reads DTD. N-linked (GlcNAc...) asparagine glycosylation occurs at N203.

Belongs to the glycosyltransferase 32 family. Ubiquitous. Highly expressed in kidney, heart, spleen, liver, testis and placenta.

The protein resides in the golgi apparatus membrane. It carries out the reaction a beta-D-Gal-(1-&gt;4)-beta-D-Glc-(1&lt;-&gt;1)-Cer(d18:1(4E)) + UDP-alpha-D-galactose = a globoside Gb3Cer (d18:1(4E)) + UDP + H(+). It catalyses the reaction a beta-D-Gal-(1&lt;-&gt;1')-ceramide + UDP-alpha-D-galactose = alpha-D-Gal-(1-&gt;4)-beta-D-Gal-(1&lt;-&gt;1')-Cer + UDP + H(+). It participates in glycolipid biosynthesis. Its function is as follows. Catalyzes the transfer of galactose from UDP-alpha-D-galactose to lactosylceramide/beta-D-galactosyl-(1-&gt;4)-beta-D-glucosyl-(1&lt;-&gt;1)-ceramide(d18:1(4E)) to produce globotriaosylceramide/globoside Gb3Cer (d18:1(4E)). Also able to transfer galactose to galactosylceramide/beta-D-Gal-(1&lt;-&gt;1')-Cer. Globoside Gb3Cer is a glycosphingolipid of the globo serie, one of the major types of neutral root structures of glycosphingolipids, that constitute a significant portion of mammalian cell membranes. Globotriaosylceramide/globoside Gb3Cer in blood and tissue cell membranes is the antigen Pk of blood histogroup P. Functionally, (Microbial infection) Globotriaosylceramide is one of the cellular ligands for bacterial verotoxins. This is Lactosylceramide 4-alpha-galactosyltransferase (A4GALT) from Homo sapiens (Human).